We begin with the raw amino-acid sequence, 737 residues long: Catalase-peroxidase 2 (737 aa).

The segment at 1–33 (MPEATEHPPIGEAQTEPAQSGCPMVIKPPVEGG) is disordered. Residues 107–235 (WHAAGTYRVQ…LGASHMGLIY (129 aa)) constitute a cross-link (tryptophyl-tyrosyl-methioninium (Trp-Tyr) (with M-261)). Histidine 108 (proton acceptor) is an active-site residue. Positions 235–261 (YVNPEGPEGNPDPIAAAIDIRETFGRM) form a cross-link, tryptophyl-tyrosyl-methioninium (Tyr-Met) (with W-107). Heme is bound at residue histidine 276.

It belongs to the peroxidase family. Peroxidase/catalase subfamily. As to quaternary structure, homodimer or homotetramer. Heme b is required as a cofactor. Formation of the three residue Trp-Tyr-Met cross-link is important for the catalase, but not the peroxidase activity of the enzyme.

The enzyme catalyses H2O2 + AH2 = A + 2 H2O. It catalyses the reaction 2 H2O2 = O2 + 2 H2O. Functionally, bifunctional enzyme with both catalase and broad-spectrum peroxidase activity. The chain is Catalase-peroxidase 2 from Mycolicibacterium vanbaalenii (strain DSM 7251 / JCM 13017 / BCRC 16820 / KCTC 9966 / NRRL B-24157 / PYR-1) (Mycobacterium vanbaalenii).